The following is an 822-amino-acid chain: Glycerol-3-phosphate acyltransferase (822 aa).

Positions 304 to 309 (CHRSHM) match the HXXXXD motif motif.

Belongs to the GPAT/DAPAT family.

It localises to the cell inner membrane. It catalyses the reaction sn-glycerol 3-phosphate + an acyl-CoA = a 1-acyl-sn-glycero-3-phosphate + CoA. It participates in phospholipid metabolism; CDP-diacylglycerol biosynthesis; CDP-diacylglycerol from sn-glycerol 3-phosphate: step 1/3. The polypeptide is Glycerol-3-phosphate acyltransferase (Yersinia enterocolitica serotype O:8 / biotype 1B (strain NCTC 13174 / 8081)).